Reading from the N-terminus, the 328-residue chain is Delta-aminolevulinic acid dehydratase (328 aa).

The active-site Schiff-base intermediate with substrate is the Lys200. 5-aminolevulinate-binding residues include Arg210 and Lys222. Glu238 contacts Mg(2+). Residue Lys253 is the Schiff-base intermediate with substrate of the active site. 2 residues coordinate 5-aminolevulinate: Ser279 and Tyr318.

This sequence belongs to the ALAD family. As to quaternary structure, homooctamer.

The catalysed reaction is 2 5-aminolevulinate = porphobilinogen + 2 H2O + H(+). The protein operates within porphyrin-containing compound metabolism; protoporphyrin-IX biosynthesis; coproporphyrinogen-III from 5-aminolevulinate: step 1/4. Its activity is regulated as follows. Stimulated by magnesium, inhibited by zinc. In terms of biological role, catalyzes an early step in the biosynthesis of tetrapyrroles. Binds two molecules of 5-aminolevulinate per subunit, each at a distinct site, and catalyzes their condensation to form porphobilinogen. The sequence is that of Delta-aminolevulinic acid dehydratase (hemB) from Chlorobaculum tepidum (strain ATCC 49652 / DSM 12025 / NBRC 103806 / TLS) (Chlorobium tepidum).